Here is a 215-residue protein sequence, read N- to C-terminus: FGFR1 oncogene partner 2 homolog (215 aa).

Residues 12–186 (AKELVERLRE…REILQITKIS (175 aa)) are a coiled coil. The segment at 193-215 (EDASENSPHSAPVPNTDLILRKS) is disordered.

It belongs to the SIKE family.

The protein resides in the cytoplasm. The sequence is that of FGFR1 oncogene partner 2 homolog (fgfr1op2) from Xenopus laevis (African clawed frog).